The chain runs to 50 residues: Large ribosomal subunit protein bL33B (50 aa).

This sequence belongs to the bacterial ribosomal protein bL33 family.

The sequence is that of Large ribosomal subunit protein bL33B from Mycoplasmopsis agalactiae (strain NCTC 10123 / CIP 59.7 / PG2) (Mycoplasma agalactiae).